Here is a 30-residue protein sequence, read N- to C-terminus: Propionyl-CoA carboxylase alpha chain (30 aa).

Residues 1–30 enclose the Biotin carboxylation domain; it reads PKIRKVLVANRGEIAIRVMRTXKELGIATV.

Dodecamer composed of six biotin-containing alpha subunits and six beta subunits. It depends on Mg(2+) as a cofactor. Mn(2+) serves as cofactor. The cofactor is biotin.

The enzyme catalyses propanoyl-CoA + hydrogencarbonate + ATP = (S)-methylmalonyl-CoA + ADP + phosphate + H(+). The protein operates within metabolic intermediate metabolism; propanoyl-CoA degradation; succinyl-CoA from propanoyl-CoA: step 1/3. Functionally, this is one of the 2 subunits of the biotin-dependent propionyl-CoA carboxylase (PCC), the enzyme catalyzing the carboxylation of propionyl-CoA/propanoyl-CoA to D-methylmalonyl-CoA/(S)-methylmalonyl-CoA. Within the holoenzyme, the alpha subunit catalyzes the ATP-dependent carboxylation of the biotin carried by the biotin carboxyl carrier (BCC) domain, while the beta subunit then transfers the carboxyl group from carboxylated biotin to propionyl-CoA. Propionyl-CoA carboxylase also carboxylates acetyl-CoA, butyryl-CoA and succinyl-CoA. The polypeptide is Propionyl-CoA carboxylase alpha chain (Myxococcus xanthus).